Here is an 836-residue protein sequence, read N- to C-terminus: Translation initiation factor IF-2 (836 aa).

The tract at residues 1 to 234 is disordered; sequence MSDTDGKKPL…SLAAMKRKQE (234 aa). Over residues 18–27 the composition is skewed to polar residues; the sequence is SGQVKQSFSH. The span at 50–60 shows a compositional bias: low complexity; that stretch reads SGSSTTTSSPS. A compositionally biased stretch (basic and acidic residues) spans 88-156; that stretch reads KLREVEDAKR…ATRRAEEAKR (69 aa). A compositionally biased stretch (low complexity) spans 167–176; that stretch reads PAESRASAPP. The segment covering 185–206 has biased composition (basic and acidic residues); it reads SRKEREREADRDRTTKKDDSRR. Positions 333 to 501 constitute a tr-type G domain; sequence PRPPIITIMG…NIALQAEILD (169 aa). The segment at 342–349 is G1; it reads GHVDHGKT. 342 to 349 contacts GTP; that stretch reads GHVDHGKT. The G2 stretch occupies residues 367–371; that stretch reads GITQH. Residues 389-392 form a G3 region; sequence DTPG. GTP contacts are provided by residues 389–393 and 443–446; these read DTPGH and NKID. The segment at 443–446 is G4; the sequence is NKID. The tract at residues 479–481 is G5; sequence SAK.

This sequence belongs to the TRAFAC class translation factor GTPase superfamily. Classic translation factor GTPase family. IF-2 subfamily.

It localises to the cytoplasm. Functionally, one of the essential components for the initiation of protein synthesis. Protects formylmethionyl-tRNA from spontaneous hydrolysis and promotes its binding to the 30S ribosomal subunits. Also involved in the hydrolysis of GTP during the formation of the 70S ribosomal complex. This Cereibacter sphaeroides (strain ATCC 17029 / ATH 2.4.9) (Rhodobacter sphaeroides) protein is Translation initiation factor IF-2.